Consider the following 504-residue polypeptide: Anaerobic nitric oxide reductase transcription regulator NorR (504 aa).

4-aspartylphosphate is present on D57. A Sigma-54 factor interaction domain is found at 187–416 (MIGLSPGMTQ…LEHAIHRAVV (230 aa)). ATP contacts are provided by residues 215–222 (GETGTGKE) and 278–287 (ADNGTLFLDE). Positions 479 to 498 (WAACARMLETDVANLHRLAK) form a DNA-binding region, H-T-H motif.

It participates in nitrogen metabolism; nitric oxide reduction. Functionally, required for the expression of anaerobic nitric oxide (NO) reductase, acts as a transcriptional activator for at least the norVW operon. Activation also requires sigma-54. The protein is Anaerobic nitric oxide reductase transcription regulator NorR of Escherichia coli (strain K12 / MC4100 / BW2952).